A 419-amino-acid polypeptide reads, in one-letter code: L-rhamnose isomerase (419 aa).

Residues His-262, Asp-294, and Asp-296 each coordinate Mn(2+).

It belongs to the rhamnose isomerase family. Homotetramer. Requires Mn(2+) as cofactor.

It localises to the cytoplasm. The catalysed reaction is L-rhamnopyranose = L-rhamnulose. It participates in carbohydrate degradation; L-rhamnose degradation; glycerone phosphate from L-rhamnose: step 1/3. Catalyzes the interconversion of L-rhamnose and L-rhamnulose. The chain is L-rhamnose isomerase from Escherichia coli (strain SMS-3-5 / SECEC).